The sequence spans 300 residues: Glycerol-3-phosphate dehydrogenase [NAD(P)+] (300 aa).

The NADPH site is built by W11, K33, and K79. The sn-glycerol 3-phosphate site is built by K79, G107, and S109. Residue A111 participates in NADPH binding. 5 residues coordinate sn-glycerol 3-phosphate: K161, D214, S224, R225, and N226. The active-site Proton acceptor is K161. R225 contributes to the NADPH binding site. NADPH is bound by residues V249 and E251.

The protein belongs to the NAD-dependent glycerol-3-phosphate dehydrogenase family.

The protein localises to the cytoplasm. It carries out the reaction sn-glycerol 3-phosphate + NAD(+) = dihydroxyacetone phosphate + NADH + H(+). The enzyme catalyses sn-glycerol 3-phosphate + NADP(+) = dihydroxyacetone phosphate + NADPH + H(+). Its pathway is membrane lipid metabolism; glycerophospholipid metabolism. Functionally, catalyzes the reduction of the glycolytic intermediate dihydroxyacetone phosphate (DHAP) to sn-glycerol 3-phosphate (G3P), the key precursor for phospholipid synthesis. The polypeptide is Glycerol-3-phosphate dehydrogenase [NAD(P)+] (Campylobacter lari (strain RM2100 / D67 / ATCC BAA-1060)).